Consider the following 208-residue polypeptide: Holliday junction branch migration complex subunit RuvA (208 aa).

Positions 1–69 are domain I; that stretch reads MIGFLQGYVV…EDQMVLFGFA (69 aa). The segment at 70 to 148 is domain II; that stretch reads VVAERDLFRQ…EWRDQAGLKT (79 aa). The interval 149-159 is flexible linker; it reads LPSAGPIDSVQ. Residues 159–208 form a domain III region; it reads QEDVEMTLLALGYTSQEVMRALQAVGQNTALAKNSDTEAWIREAIAWLSQ.

Belongs to the RuvA family. Homotetramer. Forms an RuvA(8)-RuvB(12)-Holliday junction (HJ) complex. HJ DNA is sandwiched between 2 RuvA tetramers; dsDNA enters through RuvA and exits via RuvB. An RuvB hexamer assembles on each DNA strand where it exits the tetramer. Each RuvB hexamer is contacted by two RuvA subunits (via domain III) on 2 adjacent RuvB subunits; this complex drives branch migration. In the full resolvosome a probable DNA-RuvA(4)-RuvB(12)-RuvC(2) complex forms which resolves the HJ.

The protein localises to the cytoplasm. Functionally, the RuvA-RuvB-RuvC complex processes Holliday junction (HJ) DNA during genetic recombination and DNA repair, while the RuvA-RuvB complex plays an important role in the rescue of blocked DNA replication forks via replication fork reversal (RFR). RuvA specifically binds to HJ cruciform DNA, conferring on it an open structure. The RuvB hexamer acts as an ATP-dependent pump, pulling dsDNA into and through the RuvAB complex. HJ branch migration allows RuvC to scan DNA until it finds its consensus sequence, where it cleaves and resolves the cruciform DNA. The sequence is that of Holliday junction branch migration complex subunit RuvA from Acaryochloris marina (strain MBIC 11017).